The primary structure comprises 276 residues: NH(3)-dependent NAD(+) synthetase (276 aa).

51-58 (GISGGVDS) is an ATP binding site. D57 serves as a coordination point for Mg(2+). R148 lines the deamido-NAD(+) pocket. T168 contacts ATP. Mg(2+) is bound at residue E173. Deamido-NAD(+) contacts are provided by K181 and D188. ATP is bound by residues K197 and T219. Deamido-NAD(+) is bound at residue 268-269 (HK).

This sequence belongs to the NAD synthetase family. Homodimer.

It catalyses the reaction deamido-NAD(+) + NH4(+) + ATP = AMP + diphosphate + NAD(+) + H(+). It participates in cofactor biosynthesis; NAD(+) biosynthesis; NAD(+) from deamido-NAD(+) (ammonia route): step 1/1. Functionally, catalyzes the ATP-dependent amidation of deamido-NAD to form NAD. Uses ammonia as a nitrogen source. The polypeptide is NH(3)-dependent NAD(+) synthetase (Streptomyces coelicolor (strain ATCC BAA-471 / A3(2) / M145)).